The primary structure comprises 508 residues: MDEDVLKEAIEQYKQQIIQIQTVLESGQIEGRAELAKLKDDLTELIQVTEESLLSLKKSQLLQLLEQQESSHHDSGTPETDTKTSVDYRNSYVNDHTIDDNDDEDNDENIIGTKCRVAFTQEWGVKEHHNAMVFKLESIPLDEETVDQAKVRVLFLNPTHRSMVPCPYFLEGKCKFAGAECRFSHGYLVDVEHLKPFKEPDFSSVKAGQRCLARYSDGVWYNSTIKSIKHESHEFLIHYETYNTDATLPLDDIYPLGPEEVESDSESDSQSDTGDSSSSKAAIEQDDDVIRYAWKPTGALSSLGDWEQHTKGIGSKLMAKMGYIFGKGLGKDGEGRVEPIEVVVLPQGKSLDKCAELREKNKLKEPFKRKKKKLVVASTTSASQGKASDVFDFINHKLGHSKGSLHDLRVSHPGAKPDIRKTRKSADENTNWNIQLFKIHEEISSVKKQLNKQEEALQRHTTRDSRNKTIFTEKRDSVHNRLQELLKKEKKIQEKIHQKDQHRKLTVF.

Residues 67-86 form a disordered region; that stretch reads QQESSHHDSGTPETDTKTSV. Positions 69–86 are enriched in basic and acidic residues; it reads ESSHHDSGTPETDTKTSV. The segment at 161-188 adopts a C3H1-type zinc-finger fold; it reads RSMVPCPYFLEGKCKFAGAECRFSHGYL. Residues 253–282 form a disordered region; it reads IYPLGPEEVESDSESDSQSDTGDSSSSKAA. Positions 259 to 269 are enriched in acidic residues; sequence EEVESDSESDS. Residues 270-279 show a composition bias toward low complexity; that stretch reads QSDTGDSSSS. Residues 310–356 enclose the G-patch domain; sequence TKGIGSKLMAKMGYIFGKGLGKDGEGRVEPIEVVVLPQGKSLDKCAE. Residues 404-426 are disordered; that stretch reads SLHDLRVSHPGAKPDIRKTRKSA.

It is found in the nucleus. Transcription repressor. The sequence is that of Zinc finger CCCH-type with G patch domain-containing protein from Nematostella vectensis (Starlet sea anemone).